Here is a 117-residue protein sequence, read N- to C-terminus: Protein SMALL AUXIN UP-REGULATED RNA 54 (117 aa).

Belongs to the ARG7 family. In terms of tissue distribution, expressed in trichomes. Hardly observed in leaves.

The protein resides in the cell membrane. Functionally, provide a mechanistic link between auxin and plasma membrane H(+)-ATPases (PM H(+)-ATPases, e.g. AHA1 and AHA2), and triggers PM H(+)-ATPases activity by promoting phosphorylation of their C-terminal autoinhibitory domain as a result of PP2C-D subfamily of type 2C phosphatases inhibition, thus leading to the acidification of the apoplast and the facilitation of solutes and water uptake to drive cell expansion. Triggers plant growth probably by promoting cell elongation. Regulates branch angles and bending. This Arabidopsis thaliana (Mouse-ear cress) protein is Protein SMALL AUXIN UP-REGULATED RNA 54.